Consider the following 254-residue polypeptide: MDSELEDLCSYVNEKIGNIKKILSIRNLGQDPALKTTLSKIGDEIIAVNELLNKFELEIQYQEQTNSSLKELCESLREECEDVEHLKEHVPPHLPQVTATQSLVHKPEPDPKESDKAEEPGLPKKPPREQRIIKEMQFITMDEFSDVPAYMKSRLTYCQINDIIKEINKAVVSKYKIMHQPKASMSSVKRNLYQRFINEETKDTKGHHFIVEADIKEFTALKVDKRFYVIMHILRHCHRLSEVRGGGLTRYVIT.

Residues Glu-56–Val-90 are a coiled coil. The segment at Glu-88 to Glu-129 is disordered. Residues Pro-91–Arg-131 form a flexiple loop that anchors MAPRE1 region. A Slightly degenerated SXLP motif; may mediate interaction with MAPRE1, targeting to microtubule plus ends, stabilization on kinetochores and is required for proper chromosome alignment to the metaphase plate motif is present at residues Pro-92–Pro-95. Positions His-105–Glu-129 are enriched in basic and acidic residues. The interval Arg-131–Thr-254 is binds microtubules and protein phosphatase PP1 subunit PPP1CA. Thr-156 carries the phosphothreonine modification. The residue at position 241 (Ser-241) is a Phosphoserine.

It belongs to the SKA1 family. As to quaternary structure, component of the SKA complex, composed of SKA1, SKA2 and SKA3. The SKA complex is a homodimer organized around a central W-shaped coiled-coil structure, formed by the interacting domains of SKA1, SKA2, and SKA3, each end of the 'W' is extended further by the C-terminal microtubule-binding domains of SKA1 and SKA3; the complex forms extended structures on microtubules. Interacts (via SXLP motif) with MAPRE1 (via C-terminus); the interaction is direct and stabilizes the kinetochore-microtubule attachment of the SKA1 complex. Interacts (via C-terminus) with protein phosphatase PP1 subunit PPP1CA; the interaction is direct and required for recruitment of PPP1CA to the kinetochore. Interacts with the NDC80 complex; the interaction is required to establish kinetochore-microtubule end-on attachments.

The protein resides in the cytoplasm. It is found in the cytoskeleton. Its subcellular location is the spindle. It localises to the chromosome. The protein localises to the centromere. The protein resides in the kinetochore. It is found in the microtubule organizing center. Its subcellular location is the centrosome. Its function is as follows. Component of the SKA complex, a microtubule plus end-binding complex of the outer kinetochore that stabilizes spindle microtubule-kinetochore attachments, promotes alignment of chromosomes at the mitotic spindle equator (chromosome congression) and assists suppression of the spindle assembly checkpoint. Kinetochores, consisting of a centromere-associated inner segment and a microtubule-contacting outer segment, play a crucial role in chromosome segregation by mediating the physical connection between centromeric DNA and spindle microtubules. The outer kinetochore is made up of the ten-subunit KMN network complex, comprising the MIS12, NDC80 and KNL1 complexes, and auxiliary microtubule-associated components such as the SKA complex; together they connect the outer kinetochore with the inner kinetochore, bind microtubules, and mediate interactions with mitotic checkpoint proteins that delay anaphase until chromosomes are bioriented on the spindle. The SKA complex is loaded onto bioriented kinetochores and it facilitates chromosome congression by stabilizing microtubules together with MAPRE1, and end-on attachment of the NDC80 complex to depolymerizing spindle microtubules, thereby assisting the poleward-moving kinetochore in withstanding microtubule pulling forces. The complex associates with dynamic microtubule plus-ends and can track both depolymerizing and elongating microtubules. The complex recruits protein phosphatase 1 (PP1) to the kinetochore in prometaphase and metaphase, to oppose spindle assembly checkpoint signaling and promote the onset of anaphase. In the complex, it mediates interactions with microtubules. It also stimulates AURKB/Aurora B catalytic activity. During meiosis the SKA complex stabilizes the meiotic spindle and is required for its migration to the cortex. The polypeptide is SKA complex subunit 1 (Ska1) (Mus musculus (Mouse)).